The chain runs to 530 residues: Type II methyltransferase M.MjaII (530 aa).

It belongs to the N(4)/N(6)-methyltransferase family. N(4) subfamily.

It catalyses the reaction a 2'-deoxycytidine in DNA + S-adenosyl-L-methionine = an N(4)-methyl-2'-deoxycytidine in DNA + S-adenosyl-L-homocysteine + H(+). An alpha subtype methylase that recognizes the double-stranded sequence 5'-GGNCC-3', methylates C-5 on both strands, and protects the DNA from cleavage by the MjaII endonuclease. The chain is Type II methyltransferase M.MjaII (mjaIIM) from Methanocaldococcus jannaschii (strain ATCC 43067 / DSM 2661 / JAL-1 / JCM 10045 / NBRC 100440) (Methanococcus jannaschii).